The following is a 927-amino-acid chain: Solute carrier family 12 protein B0303.11 (927 aa).

At 1–23 the chain is on the cytoplasmic side; sequence MPSSTASSEDAPITSTAWMNWKD. Residues 24–44 form a helical membrane-spanning segment; it reads VFLKCVQPMLAVVLLLRFSSI. The Extracellular portion of the chain corresponds to 45-53; the sequence is VDEAGFTTT. A helical transmembrane segment spans residues 54–74; the sequence is IILVFFTFLVSLVTGWSACTV. Residues 75-95 lie on the Cytoplasmic side of the membrane; sequence VSRKSSEVGFVKTMLAYSSTE. The helical transmembrane segment at 96 to 116 threads the bilayer; it reads FAISFSIIYLFCLLVATSTFL. The Extracellular portion of the chain corresponds to 117-141; that stretch reads TSAAEAVLHIFSTFSLELLDGATHD. A helical membrane pass occupies residues 142 to 159; that stretch reads LRLVSSVLSLITLALCMV. Over 160–165 the chain is Cytoplasmic; that stretch reads RNRNAR. Residues 166 to 186 form a helical membrane-spanning segment; that stretch reads FVRTFIFALTCIAIALQLSSV. Over 187 to 212 the chain is Extracellular; it reads MFRYGEYQLRRVSDRNAMIPSPPNEE. The chain crosses the membrane as a helical span at residues 213-233; it reads ISTIFAQLFPAAMCGLTILNI. The Cytoplasmic portion of the chain corresponds to 234–244; it reads GSKLQNTAPRG. The helical transmembrane segment at 245-265 threads the bilayer; it reads ALIAIAVSACFYGAAAMLDYV. The Extracellular segment spans residues 266-284; the sequence is EFFARTSTSNSTGSAEYNE. Residue Asn-275 is glycosylated (N-linked (GlcNAc...) asparagine). The chain crosses the membrane as a helical span at residues 285–305; sequence FLSYIYTTVPMAIVITLACVL. Residues 306-345 lie on the Cytoplasmic side of the membrane; sequence SAVSTLKYAAVILQSLGRSNQCRCILWLAKGFGERDIPIR. The chain crosses the membrane as a helical span at residues 346 to 366; the sequence is CLLLLSTVQILVSAIGSYDIL. Position 367 (Cys-367) is a topological domain, extracellular. Residues 368–388 traverse the membrane as a helical segment; that stretch reads IPTTVFYLFAYALFNFYVFLV. Residues 389-394 are Cytoplasmic-facing; it reads KLSDPE. Residues 395–415 form a helical membrane-spanning segment; the sequence is IPSPPTLLSLAISAACFIASL. Residues 416–419 are Extracellular-facing; the sequence is YTNR. The helical transmembrane segment at 420 to 440 threads the bilayer; sequence HLALFIASIFAISYCSLLYII. Residues 441-927 lie on the Cytoplasmic side of the membrane; it reads RRERNEDGEE…SMSALRLKFP (487 aa).

It belongs to the SLC12A transporter family.

The protein localises to the cell membrane. The chain is Solute carrier family 12 protein B0303.11 from Caenorhabditis elegans.